The following is a 647-amino-acid chain: Threonine--tRNA ligase (647 aa).

The TGS domain maps to 1-60 (MQVTIEDQSLEAAAGEACGQVLSRAVSGKRLKNAVACLVDGQPRDLAFPLPEDAHELALV). The catalytic stretch occupies residues 242–533 (DHRKLGAQLD…LIEHTAGALP (292 aa)). Residues C334, H385, and H510 each contribute to the Zn(2+) site.

This sequence belongs to the class-II aminoacyl-tRNA synthetase family. As to quaternary structure, homodimer. The cofactor is Zn(2+).

Its subcellular location is the cytoplasm. The catalysed reaction is tRNA(Thr) + L-threonine + ATP = L-threonyl-tRNA(Thr) + AMP + diphosphate + H(+). Functionally, catalyzes the attachment of threonine to tRNA(Thr) in a two-step reaction: L-threonine is first activated by ATP to form Thr-AMP and then transferred to the acceptor end of tRNA(Thr). Also edits incorrectly charged L-seryl-tRNA(Thr). This Solidesulfovibrio magneticus (strain ATCC 700980 / DSM 13731 / RS-1) (Desulfovibrio magneticus) protein is Threonine--tRNA ligase.